The sequence spans 352 residues: Respiratory nitrate reductase subunit beta (352 aa).

The 4Fe-4S ferredoxin-type 1 domain maps to 20-48 (VAMVMDLNKCIGCQTCTVACKSLWTEGGG). Residues Cys29, Cys32, Cys35, and Cys39 each coordinate [4Fe-4S] cluster. Disordered regions lie at residues 63 to 95 (KGYP…KEDY) and 111 to 131 (SDRP…DEDQ). The span at 78–95 (SSEHKERKPGQIPDKEDY) shows a compositional bias: basic and acidic residues. 2 consecutive 4Fe-4S ferredoxin-type domains span residues 139-170 (SYYF…KREE) and 172-201 (GIVL…YNAT). 3 residues coordinate [4Fe-4S] cluster: Cys148, Cys151, and Cys156. Cys160, Cys181, and Cys187 together coordinate [3Fe-4S] cluster. [4Fe-4S] cluster-binding residues include Cys191, Cys208, Cys211, Cys229, and Cys233.

In terms of assembly, probable multiprotein complex; a catalytic heterodimer of an alpha and beta chain is proposed to associate with additional subunits involved in membrane attachment and electron transfer. Requires [4Fe-4S] cluster as cofactor. The cofactor is [3Fe-4S] cluster.

It is found in the cell membrane. The catalysed reaction is nitrate + a quinol = a quinone + nitrite + H2O. Its activity is regulated as follows. Inhibited by cyanide, azide and antimycin A. Enzyme stability is not dependent on salt concentration. In terms of biological role, the respiratory membrane-bound nitrate reductase enzyme complex plays a role in generation of metabolic energy by using nitrate as a terminal electron acceptor during anaerobic conditions. The beta chain is an electron transfer unit containing four cysteine clusters involved in the formation of iron-sulfur centers. The polypeptide is Respiratory nitrate reductase subunit beta (narH) (Haloferax mediterranei (strain ATCC 33500 / DSM 1411 / JCM 8866 / NBRC 14739 / NCIMB 2177 / R-4) (Halobacterium mediterranei)).